A 257-amino-acid chain; its full sequence is Dihydroorotate dehydrogenase B (NAD(+)), electron transfer subunit (257 aa).

One can recognise an FAD-binding FR-type domain in the interval 2-100 (ILIEDLTVVS…MGPQGNGFDI (99 aa)). Residues 51–54 (RPIS), 68–70 (VYR), and 75–76 (GT) contribute to the FAD site. Cysteine 220, cysteine 225, cysteine 228, and cysteine 244 together coordinate [2Fe-2S] cluster.

The protein belongs to the PyrK family. In terms of assembly, heterotetramer of 2 PyrK and 2 PyrD type B subunits. The cofactor is [2Fe-2S] cluster. FAD serves as cofactor.

It participates in pyrimidine metabolism; UMP biosynthesis via de novo pathway; orotate from (S)-dihydroorotate (NAD(+) route): step 1/1. In terms of biological role, responsible for channeling the electrons from the oxidation of dihydroorotate from the FMN redox center in the PyrD type B subunit to the ultimate electron acceptor NAD(+). In Streptococcus thermophilus (strain ATCC BAA-491 / LMD-9), this protein is Dihydroorotate dehydrogenase B (NAD(+)), electron transfer subunit.